The sequence spans 387 residues: Succinate--CoA ligase [ADP-forming] subunit beta (387 aa).

Positions 9–236 constitute an ATP-grasp domain; it reads KELFAKHNVP…RAATDPLELK (228 aa). Residues lysine 45, 52–54, serine 94, and glutamate 99 contribute to the ATP site; that span reads GRG. Positions 191 and 205 each coordinate Mg(2+). Substrate-binding positions include asparagine 256 and 318–320; that span reads GIT.

The protein belongs to the succinate/malate CoA ligase beta subunit family. In terms of assembly, heterotetramer of two alpha and two beta subunits. Requires Mg(2+) as cofactor.

The catalysed reaction is succinate + ATP + CoA = succinyl-CoA + ADP + phosphate. It catalyses the reaction GTP + succinate + CoA = succinyl-CoA + GDP + phosphate. The protein operates within carbohydrate metabolism; tricarboxylic acid cycle; succinate from succinyl-CoA (ligase route): step 1/1. Functionally, succinyl-CoA synthetase functions in the citric acid cycle (TCA), coupling the hydrolysis of succinyl-CoA to the synthesis of either ATP or GTP and thus represents the only step of substrate-level phosphorylation in the TCA. The beta subunit provides nucleotide specificity of the enzyme and binds the substrate succinate, while the binding sites for coenzyme A and phosphate are found in the alpha subunit. The sequence is that of Succinate--CoA ligase [ADP-forming] subunit beta from Mycobacterium tuberculosis (strain CDC 1551 / Oshkosh).